The chain runs to 100 residues: Small ribosomal subunit protein uS14c (100 aa).

The protein belongs to the universal ribosomal protein uS14 family. Part of the 30S ribosomal subunit.

The protein localises to the plastid. The protein resides in the chloroplast. Binds 16S rRNA, required for the assembly of 30S particles. This chain is Small ribosomal subunit protein uS14c, found in Nasturtium officinale (Watercress).